A 204-amino-acid chain; its full sequence is Tumor necrosis factor receptor superfamily member 26 (204 aa).

The N-terminal stretch at 1–19 (MTRLRLLLLLGLLLRVAVC) is a signal peptide. Residues 20-164 (SVNTITLCKI…SQCFCFSKPL (145 aa)) are Extracellular-facing. Intrachain disulfides connect Cys-27/Cys-38, Cys-39/Cys-52, Cys-42/Cys-61, Cys-64/Cys-79, Cys-82/Cys-95, Cys-85/Cys-103, Cys-105/Cys-120, Cys-123/Cys-135, and Cys-126/Cys-143. TNFR-Cys repeat units lie at residues 27–61 (CKIG…KSEC), 63–103 (PCDS…DRVC), and 104–143 (QCKQ…DTVC). A glycan (N-linked (GlcNAc...) asparagine) is linked at Asn-57. An N-linked (GlcNAc...) asparagine glycan is attached at Asn-136. The helical transmembrane segment at 165-185 (GIVVIIAAFIIIIGAVIILIL) threads the bilayer. At 186-204 (KIICYCKRGENIQLSSTML) the chain is on the cytoplasmic side.

Expressed in thymus and spleen. Detectable levels in lung.

The protein resides in the membrane. This Mus musculus (Mouse) protein is Tumor necrosis factor receptor superfamily member 26 (Tnfrsf26).